Here is a 67-residue protein sequence, read N- to C-terminus: Large ribosomal subunit protein uL29 (67 aa).

The protein belongs to the universal ribosomal protein uL29 family.

The chain is Large ribosomal subunit protein uL29 (rpmC) from Halalkalibacterium halodurans (strain ATCC BAA-125 / DSM 18197 / FERM 7344 / JCM 9153 / C-125) (Bacillus halodurans).